A 144-amino-acid polypeptide reads, in one-letter code: 3-dehydroquinate dehydratase (144 aa).

Tyr-22 serves as the catalytic Proton acceptor. 3 residues coordinate substrate: Asn-73, His-79, and Asp-86. His-99 acts as the Proton donor in catalysis. Residues 100-101 (LS) and Arg-110 contribute to the substrate site.

The protein belongs to the type-II 3-dehydroquinase family. As to quaternary structure, homododecamer.

It catalyses the reaction 3-dehydroquinate = 3-dehydroshikimate + H2O. The protein operates within metabolic intermediate biosynthesis; chorismate biosynthesis; chorismate from D-erythrose 4-phosphate and phosphoenolpyruvate: step 3/7. In terms of biological role, catalyzes a trans-dehydration via an enolate intermediate. The sequence is that of 3-dehydroquinate dehydratase from Trichlorobacter lovleyi (strain ATCC BAA-1151 / DSM 17278 / SZ) (Geobacter lovleyi).